Here is a 488-residue protein sequence, read N- to C-terminus: Facilitated trehalose transporter Tret1-2 homolog (488 aa).

Over 1–28 (MKILMRADTHVSYSVPAEGTKANFTFSQ) the chain is Cytoplasmic. The chain crosses the membrane as a helical span at residues 29–49 (VLAALSVSLCSLVVGFVSAYT). At 50–72 (SPALVSMTDRTITSFEVTKDAGS) the chain is on the extracellular side. A helical membrane pass occupies residues 73–93 (WVGGIMPLAALAGGITGGPLI). The Cytoplasmic portion of the chain corresponds to 94–105 (EYLGRRNTILAT). Residues 106–126 (AVPFIVSSLLIACAVNVIMIL) traverse the membrane as a helical segment. Topologically, residues 127 to 129 (CGR) are extracellular. Residues 130–150 (FLTGFCVGIASLSLPVYLGET) traverse the membrane as a helical segment. At 151 to 160 (LQPEVRGTLG) the chain is on the cytoplasmic side. Residues 161 to 181 (LLPTALGNIGILVCYVAGSFM) form a helical membrane-spanning segment. The N-linked (GlcNAc...) asparagine glycan is linked to Asn-182. At 182 to 184 (NWS) the chain is on the extracellular side. A helical transmembrane segment spans residues 185–205 (ILAFLGAALPVPFLILMIIIP). Topologically, residues 206–268 (ETPRWFVNRG…ELFKRINLKP (63 aa)) are cytoplasmic. The chain crosses the membrane as a helical span at residues 269–289 (LSISLGLMFFQQFSGINAVIF). Topologically, residues 290 to 305 (YTVQIFKDAGSTIDSN) are extracellular. The helical transmembrane segment at 306–326 (LCTIIVGIVNFFATFMGIILI) threads the bilayer. Topologically, residues 327–332 (DRLGRK) are cytoplasmic. The helical transmembrane segment at 333–353 (ILLYVSDIAMILTLSILGGFF) threads the bilayer. The Extracellular segment spans residues 354 to 372 (YCKAHGPDVSHLGWLPLSC). A helical membrane pass occupies residues 373–393 (FVIYILGFSLGFGPIPWLMMG). Residues 394–402 (EILPAKIRG) are Cytoplasmic-facing. The chain crosses the membrane as a helical span at residues 403–423 (PAASVVTAFNWFCTFVVTKTF). Residues 424–433 (QDLTVAMGPH) are Extracellular-facing. The helical transmembrane segment at 434 to 454 (GAFWLFGVVCIVGLFFVIIYV) threads the bilayer. The Cytoplasmic segment spans residues 455-488 (PETRGKSLEEIERKMMGRVPISAVVNIKPFSFNM).

It belongs to the major facilitator superfamily. Sugar transporter (TC 2.A.1.1) family. Trehalose transporter subfamily.

The protein localises to the cell membrane. In terms of biological role, fails to transport trehalose. The sequence is that of Facilitated trehalose transporter Tret1-2 homolog from Drosophila sechellia (Fruit fly).